The sequence spans 281 residues: Nuclear receptor-interacting protein 2 (281 aa).

The segment at 18–85 (ESCSTGQRQA…RAHLSQQRRL (68 aa)) is disordered. Over residues 36-47 (TPPPSSPWPTPP) the composition is skewed to pro residues. Residues 55–78 (QEARRDEGEARTRGQEAQLRDRAH) show a composition bias toward basic and acidic residues. An LXXLL motif motif is present at residues 244–248 (LQTLL).

In terms of assembly, interacts with NR1F2, RARA and THRB in a ligand-dependent manner.

It is found in the nucleus. Down-regulates transcriptional activation by nuclear receptors such as NR1F2. The protein is Nuclear receptor-interacting protein 2 (NRIP2) of Homo sapiens (Human).